Consider the following 247-residue polypeptide: Ubiquinone biosynthesis O-methyltransferase (247 aa).

4 residues coordinate S-adenosyl-L-methionine: R39, G70, D91, and M134.

This sequence belongs to the methyltransferase superfamily. UbiG/COQ3 family.

It carries out the reaction a 3-demethylubiquinol + S-adenosyl-L-methionine = a ubiquinol + S-adenosyl-L-homocysteine + H(+). It catalyses the reaction a 3-(all-trans-polyprenyl)benzene-1,2-diol + S-adenosyl-L-methionine = a 2-methoxy-6-(all-trans-polyprenyl)phenol + S-adenosyl-L-homocysteine + H(+). It participates in cofactor biosynthesis; ubiquinone biosynthesis. In terms of biological role, O-methyltransferase that catalyzes the 2 O-methylation steps in the ubiquinone biosynthetic pathway. The chain is Ubiquinone biosynthesis O-methyltransferase from Cereibacter sphaeroides (strain ATCC 17025 / ATH 2.4.3) (Rhodobacter sphaeroides).